The following is a 352-amino-acid chain: S-adenosylmethionine:tRNA ribosyltransferase-isomerase (352 aa).

It belongs to the QueA family. As to quaternary structure, monomer.

The protein resides in the cytoplasm. The enzyme catalyses 7-aminomethyl-7-carbaguanosine(34) in tRNA + S-adenosyl-L-methionine = epoxyqueuosine(34) in tRNA + adenine + L-methionine + 2 H(+). It functions in the pathway tRNA modification; tRNA-queuosine biosynthesis. Transfers and isomerizes the ribose moiety from AdoMet to the 7-aminomethyl group of 7-deazaguanine (preQ1-tRNA) to give epoxyqueuosine (oQ-tRNA). The chain is S-adenosylmethionine:tRNA ribosyltransferase-isomerase from Bacteroides fragilis (strain ATCC 25285 / DSM 2151 / CCUG 4856 / JCM 11019 / LMG 10263 / NCTC 9343 / Onslow / VPI 2553 / EN-2).